Here is a 974-residue protein sequence, read N- to C-terminus: Pentatricopeptide repeat-containing protein At5g61990, mitochondrial (974 aa).

Residues 1–31 (MMGSMLFRKRTLVTRANFLLFRSFSVNVEKL) constitute a mitochondrion transit peptide. PPR repeat units lie at residues 96 to 130 (KLDSFSFLALDLCNFGSFEKALSVVERMIERNWPV), 150 to 184 (DGVLFGILFDGYIAKGYIEEAVFVFSSSMGLELVP), 185 to 219 (RLSRCKVLLDALLRWNRLDLFWDVYKGMVERNVVF), 220 to 250 (DVKTYHMLIIAHCRAGNVQLGKDVLFKTEKE), 257 to 275 (NVDGALKLKESMICKGLVP), 276 to 310 (LKYTYDVLIDGLCKIKRLEDAKSLLVEMDSLGVSL), 311 to 345 (DNHTYSLLIDGLLKGRNADAAKGLVHEMVSHGINI), 346 to 380 (KPYMYDCCICVMSKEGVMEKAKALFDGMIASGLIP), 381 to 415 (QAQAYASLIEGYCREKNVRQGYELLVEMKKRNIVI), 416 to 450 (SPYTYGTVVKGMCSSGDLDGAYNIVKEMIASGCRP), 451 to 485 (NVVIYTTLIKTFLQNSRFGDAMRVLKEMKEQGIAP), 486 to 520 (DIFCYNSLIIGLSKAKRMDEARSFLVEMVENGLKP), 521 to 555 (NAFTYGAFISGYIEASEFASADKYVKEMRECGVLP), 556 to 590 (NKVLCTGLINEYCKKGKVIEACSAYRSMVDQGILG), 591 to 625 (DAKTYTVLMNGLFKNDKVDDAEEIFREMRGKGIAP), 626 to 660 (DVFSYGVLINGFSKLGNMQKASSIFDEMVEEGLTP), 661 to 695 (NVIIYNMLLGGFCRSGEIEKAKELLDEMSVKGLHP), 696 to 730 (NAVTYCTIIDGYCKSGDLAEAFRLFDEMKLKGLVP), 731 to 761 (DSFVYTTLVDGCCRLNDVERAITIFGTNKKG), 765 to 799 (STAPFNALINWVFKFGKTELKTEVLNRLMDGSFDR), 804 to 838 (NDVTYNIMIDYLCKEGNLEAAKELFHQMQNANLMP), 839 to 873 (TVITYTSLLNGYDKMGRRAEMFPVFDEAIAAGIEP), 874 to 908 (DHIMYSVIINAFLKEGMTTKALVLVDQMFAKNAVD), and 914 to 948 (SISTCRALLSGFAKVGEMEVAEKVMENMVRLQYIP).

This sequence belongs to the PPR family. P subfamily.

Its subcellular location is the mitochondrion. The sequence is that of Pentatricopeptide repeat-containing protein At5g61990, mitochondrial from Arabidopsis thaliana (Mouse-ear cress).